The following is a 280-amino-acid chain: Transcription factor ovo-like homolog lin-48 (280 aa).

4 C2H2-type zinc fingers span residues 133-155 (LTCH…IKCH), 161-183 (YLCT…TRTH), 189-212 (YKCE…RKVH), and 228-251 (FVCE…KVVH).

It localises to the nucleus. In terms of biological role, transcription factor. Involved in development of the hindgut, the male tail, and the excretory duct cell. Involved in modulating function of excretory duct cells. Plays a role in left/right patterning of cell fates in the hindgut. In Caenorhabditis elegans, this protein is Transcription factor ovo-like homolog lin-48.